Consider the following 270-residue polypeptide: Transcription factor PU.1 (270 aa).

The tract at residues 123–164 (SLSPAQPSSDEEEGERQSPPLEVSDGEADGLEPGPGLLPGET) is disordered. Phosphoserine occurs at positions 140 and 146. A compositionally biased stretch (low complexity) spans 153–164 (LEPGPGLLPGET). Positions 170-253 (IRLYQFLLDL…VKKKLTYQFS (84 aa)) form a DNA-binding region, ETS. Residues K217, R230, R233, and K243 each contribute to the DNA site.

Belongs to the ETS family. In terms of assembly, binds DNA as a monomer. Can form homomers. Directly interacts with CEBPD/NF-IL6-beta; this interaction does not affect DNA-binding properties of each partner. Interacts with NONO/p54(nrb). Interacts with RUNX1/AML1. Interacts with GFI1; the interaction represses SPI1 transcriptional activity, hence blocks SPI1-induced macrophage differentiation of myeloid progenitor cells. Interacts with CEBPE. Interacts with IRF4/Pip and IRF8. Interacts with JUN. Interacts with RB1. Interacts with TBP. In the bone marrow, concentrated in hematopoietic stem cell, lymphoid progenitor, myeloid lineage (granulocyte macrophage progenitors, classical dendritic cells, monocytes) and B-cell clusters. Among B-cells, predominantly expressed in pre-B1 cells. Expressed in germinal center B-cells.

Its subcellular location is the nucleus. Its activity is regulated as follows. Transcriptional activity at macrophage-specific genes is inhibited by interaction with GFI1, which results in the inhibition of SPI1-induced macrophage differentiation of myeloid progenitor cells, but not that of the granulocyte lineage. Its function is as follows. Pioneer transcription factor, which controls hematopoietic cell fate by decompacting stem cell heterochromatin and allowing other transcription factors to enter otherwise inaccessible genomic sites. Once in open chromatin, can directly control gene expression by binding genetic regulatory elements and can also more broadly influence transcription by recruiting transcription factors, such as interferon regulatory factors (IRFs), to otherwise inaccessible genomic regions. Transcriptionally activates genes important for myeloid and lymphoid lineages, such as CSF1R. Transcriptional activation from certain promoters, possibly containing low affinity binding sites, is achieved cooperatively with other transcription factors. FCER1A transactivation is achieved in cooperation with GATA1. May be particularly important for the pro- to pre-B cell transition. Binds (via the ETS domain) onto the purine-rich DNA core sequence 5'-GAGGAA-3', also known as the PU-box. In vitro can bind RNA and interfere with pre-mRNA splicing. The polypeptide is Transcription factor PU.1 (SPI1) (Homo sapiens (Human)).